A 384-amino-acid chain; its full sequence is 8-amino-7-oxononanoate synthase (384 aa).

Position 21 (R21) interacts with substrate. Pyridoxal 5'-phosphate is bound at residue 108-109; sequence GF. Position 133 (H133) interacts with substrate. Residues S179, H207, and T233 each contribute to the pyridoxal 5'-phosphate site. K236 carries the N6-(pyridoxal phosphate)lysine modification. Residue T352 participates in substrate binding.

This sequence belongs to the class-II pyridoxal-phosphate-dependent aminotransferase family. BioF subfamily. In terms of assembly, homodimer. Requires pyridoxal 5'-phosphate as cofactor.

The catalysed reaction is 6-carboxyhexanoyl-[ACP] + L-alanine + H(+) = (8S)-8-amino-7-oxononanoate + holo-[ACP] + CO2. Its pathway is cofactor biosynthesis; biotin biosynthesis. Its function is as follows. Catalyzes the decarboxylative condensation of pimeloyl-[acyl-carrier protein] and L-alanine to produce 8-amino-7-oxononanoate (AON), [acyl-carrier protein], and carbon dioxide. This is 8-amino-7-oxononanoate synthase from Citrobacter koseri (strain ATCC BAA-895 / CDC 4225-83 / SGSC4696).